We begin with the raw amino-acid sequence, 133 residues long: Ribonuclease VapC17 (133 aa).

Residues Asp-7 and Asp-93 each coordinate Mg(2+). The PINc domain occupies 30 to 118; it reads AICDIGELEW…HHDRDYKRIA (89 aa).

The protein belongs to the PINc/VapC protein family. It depends on Mg(2+) as a cofactor.

Functionally, toxic component of a type II toxin-antitoxin (TA) system. An RNase. The cognate antitoxin is VapB17. The chain is Ribonuclease VapC17 from Mycobacterium tuberculosis (strain CDC 1551 / Oshkosh).